Consider the following 256-residue polypeptide: Alcohol dehydrogenase (256 aa).

An NAD(+)-binding site is contributed by F12–L35. Residue S140 coordinates substrate. Y153 functions as the Proton acceptor in the catalytic mechanism.

The protein belongs to the short-chain dehydrogenases/reductases (SDR) family. In terms of assembly, homodimer.

The catalysed reaction is a primary alcohol + NAD(+) = an aldehyde + NADH + H(+). The enzyme catalyses a secondary alcohol + NAD(+) = a ketone + NADH + H(+). This Drosophila tsacasi (Fruit fly) protein is Alcohol dehydrogenase (Adh).